Reading from the N-terminus, the 91-residue chain is Small ribosomal subunit protein uS19 (91 aa).

Belongs to the universal ribosomal protein uS19 family.

In terms of biological role, protein S19 forms a complex with S13 that binds strongly to the 16S ribosomal RNA. This chain is Small ribosomal subunit protein uS19, found in Metamycoplasma hominis (strain ATCC 23114 / DSM 25592 / NBRC 14850 / NCTC 10111 / PG21) (Mycoplasma hominis).